Here is a 170-residue protein sequence, read N- to C-terminus: Crossover junction endodeoxyribonuclease RuvC (170 aa).

Active-site residues include aspartate 9, glutamate 70, and aspartate 145. Mg(2+)-binding residues include aspartate 9, glutamate 70, and aspartate 145.

The protein belongs to the RuvC family. Homodimer which binds Holliday junction (HJ) DNA. The HJ becomes 2-fold symmetrical on binding to RuvC with unstacked arms; it has a different conformation from HJ DNA in complex with RuvA. In the full resolvosome a probable DNA-RuvA(4)-RuvB(12)-RuvC(2) complex forms which resolves the HJ. It depends on Mg(2+) as a cofactor.

It localises to the cytoplasm. It carries out the reaction Endonucleolytic cleavage at a junction such as a reciprocal single-stranded crossover between two homologous DNA duplexes (Holliday junction).. Its function is as follows. The RuvA-RuvB-RuvC complex processes Holliday junction (HJ) DNA during genetic recombination and DNA repair. Endonuclease that resolves HJ intermediates. Cleaves cruciform DNA by making single-stranded nicks across the HJ at symmetrical positions within the homologous arms, yielding a 5'-phosphate and a 3'-hydroxyl group; requires a central core of homology in the junction. The consensus cleavage sequence is 5'-(A/T)TT(C/G)-3'. Cleavage occurs on the 3'-side of the TT dinucleotide at the point of strand exchange. HJ branch migration catalyzed by RuvA-RuvB allows RuvC to scan DNA until it finds its consensus sequence, where it cleaves and resolves the cruciform DNA. The polypeptide is Crossover junction endodeoxyribonuclease RuvC (Chlamydia muridarum (strain MoPn / Nigg)).